Consider the following 501-residue polypeptide: Aerobic glycerol-3-phosphate dehydrogenase (501 aa).

FAD is bound at residue 5–33 (DLIVIGGGINGAGIAADAAGRGLSVLMLE).

The protein belongs to the FAD-dependent glycerol-3-phosphate dehydrogenase family. FAD serves as cofactor.

The protein localises to the cytoplasm. The catalysed reaction is a quinone + sn-glycerol 3-phosphate = dihydroxyacetone phosphate + a quinol. It participates in polyol metabolism; glycerol degradation via glycerol kinase pathway; glycerone phosphate from sn-glycerol 3-phosphate (aerobic route): step 1/1. Conversion of glycerol 3-phosphate to dihydroxyacetone. Uses molecular oxygen or nitrate as electron acceptor. This chain is Aerobic glycerol-3-phosphate dehydrogenase (glpD), found in Escherichia coli (strain K12).